The following is a 485-amino-acid chain: Choline/ethanolamine transporter flvcr2b (485 aa).

Over 1 to 46 (MDTRFNDINRVKMGDESKSVDGEVNDNTYYSKTDAEVNFEHRYTTP) the chain is Cytoplasmic. Residues 47-71 (ETRLYKKRWVIVCLFSSYSLCNSYQ) form a helical membrane-spanning segment. 2 residues coordinate choline: asparagine 68 and tryptophan 72. The Extracellular segment spans residues 72–89 (WIQYGIINNIFMRFYGVD). A helical membrane pass occupies residues 90–117 (SFTIDWMSMIYMLTYIPLIFPVSWLLDK). Residues 118-119 (KG) are Cytoplasmic-facing. Residues 120-139 (LRVIALVAAALNCAGTWIKV) traverse the membrane as a helical segment. Topologically, residues 140–146 (ASARPDL) are extracellular. Residues 147–175 (FPVTFLGQFTCSVAQVFILGMPSRIASVW) traverse the membrane as a helical segment. Choline is bound by residues glutamine 161 and leucine 165. Residues 176–180 (FGSDE) lie on the Cytoplasmic side of the membrane. A helical transmembrane segment spans residues 181 to 206 (VSTACSIGVFGNQLGIAIGFLVPPIL). The Extracellular portion of the chain corresponds to 207-211 (VPNVD). Residues 212-241 (DLDELAAHIRVMFYITAGVATFLFVLVVIV) traverse the membrane as a helical segment. At 242–277 (FQERPEIPPTLAQAAARRISPESYSYTASILRLLRN) the chain is on the cytoplasmic side. Residues 278-308 (KAFILLVITYGLNVGCFYAVSTLLNRMIIEH) form a helical membrane-spanning segment. Tyrosine 295 contacts choline. At 309–312 (YPGE) the chain is on the extracellular side. Residues 313 to 341 (EVNAGRIGLTIVVAGMVGSLICGIWLDRS) traverse the membrane as a helical segment. Residues 342–343 (KT) are Cytoplasmic-facing. Residues 344 to 366 (YKQTTLAVYLMSLMGLVIYAFTL) traverse the membrane as a helical segment. At 367–369 (DLH) the chain is on the extracellular side. The helical transmembrane segment at 370-399 (HLWVVFITAGALGFFMTGYLPLGFEFAVEL) threads the bilayer. Residues 400-407 (TYPESEGT) lie on the Cytoplasmic side of the membrane. The chain crosses the membrane as a helical span at residues 408-433 (SSGLLNCSAQVFGIIFTICQGKIMDS). Position 417 (glutamine 417) interacts with choline. Topologically, residues 434 to 435 (FG) are extracellular. A helical membrane pass occupies residues 436–458 (TLAGNLFLCAFLLIGTIITGCIK). Topologically, residues 459 to 485 (SDLRRQLANQQAQTADHLDTSPTQTRF) are cytoplasmic.

It belongs to the major facilitator superfamily. Feline leukemia virus subgroup C receptor (TC 2.A.1.28.1) family.

It is found in the cell membrane. It localises to the mitochondrion membrane. The protein localises to the endoplasmic reticulum membrane. It catalyses the reaction choline(out) = choline(in). It carries out the reaction ethanolamine(in) = ethanolamine(out). The enzyme catalyses heme b(in) = heme b(out). In terms of biological role, choline uniporter that specifically mediates choline uptake at the blood-brain-barrier. Responsible for the majority of choline uptake across the blood-brain-barrier from the circulation into the brain. Choline, a nutrient critical for brain development, is a precursor of phosphatidylcholine, as well as betaine. Also mediates transport of ethanolamine. Choline and ethanolamine transport is not coupled with proton transport and is exclusively driven by the choline gradient across the plasma membrane. Also acts as a heme b transporter. The protein is Choline/ethanolamine transporter flvcr2b of Danio rerio (Zebrafish).